The following is a 1392-amino-acid chain: DNA-directed RNA polymerase subunit beta'' (1392 aa).

Cys-224, Cys-295, Cys-302, and Cys-305 together coordinate Zn(2+).

This sequence belongs to the RNA polymerase beta' chain family. RpoC2 subfamily. In plastids the minimal PEP RNA polymerase catalytic core is composed of four subunits: alpha, beta, beta', and beta''. When a (nuclear-encoded) sigma factor is associated with the core the holoenzyme is formed, which can initiate transcription. It depends on Zn(2+) as a cofactor.

Its subcellular location is the plastid. The protein resides in the chloroplast. It carries out the reaction RNA(n) + a ribonucleoside 5'-triphosphate = RNA(n+1) + diphosphate. In terms of biological role, DNA-dependent RNA polymerase catalyzes the transcription of DNA into RNA using the four ribonucleoside triphosphates as substrates. The polypeptide is DNA-directed RNA polymerase subunit beta'' (Solanum tuberosum (Potato)).